The primary structure comprises 550 residues: Arginine--tRNA ligase (550 aa).

A 'HIGH' region motif is present at residues 123–133; that stretch reads ANPTGYLHIAH.

Belongs to the class-I aminoacyl-tRNA synthetase family. In terms of assembly, monomer.

It is found in the cytoplasm. It catalyses the reaction tRNA(Arg) + L-arginine + ATP = L-arginyl-tRNA(Arg) + AMP + diphosphate. This Ureaplasma parvum serovar 3 (strain ATCC 27815 / 27 / NCTC 11736) protein is Arginine--tRNA ligase.